Reading from the N-terminus, the 853-residue chain is uncharacterized protein (853 aa).

Coiled-coil stretches lie at residues 313–343 (RTDEDFKEAAKKREESEKRMNKMLENRLKVA) and 480–528 (EGQV…SELI).

This is an uncharacterized protein from Ostreid herpesvirus 1 (isolate France) (OsHV-1).